The following is a 662-amino-acid chain: Transketolase (662 aa).

A substrate-binding site is contributed by H28. Residues H68 and 115–117 (GPL) each bind thiamine diphosphate. Residue D156 coordinates Mg(2+). 2 residues coordinate thiamine diphosphate: G157 and N186. Residues N186 and I188 each coordinate Mg(2+). Substrate contacts are provided by H261, R356, and S383. H261 is a binding site for thiamine diphosphate. The active-site Proton donor is the E410. A thiamine diphosphate-binding site is contributed by F436. The substrate site is built by H460, D468, and R519.

This sequence belongs to the transketolase family. Homodimer. Requires Mg(2+) as cofactor. It depends on Ca(2+) as a cofactor. Mn(2+) serves as cofactor. Co(2+) is required as a cofactor. The cofactor is thiamine diphosphate.

The catalysed reaction is D-sedoheptulose 7-phosphate + D-glyceraldehyde 3-phosphate = aldehydo-D-ribose 5-phosphate + D-xylulose 5-phosphate. Its pathway is carbohydrate biosynthesis; Calvin cycle. It participates in carbohydrate degradation; pentose phosphate pathway. In terms of biological role, catalyzes the transfer of a two-carbon ketol group from a ketose donor to an aldose acceptor, via a covalent intermediate with the cofactor thiamine pyrophosphate. The sequence is that of Transketolase (tkt) from Staphylococcus epidermidis (strain ATCC 12228 / FDA PCI 1200).